The primary structure comprises 694 residues: Methionine--tRNA ligase (694 aa).

The 'HIGH' region signature appears at proline 12–histidine 22. Zn(2+) contacts are provided by cysteine 143, cysteine 146, cysteine 156, and cysteine 159. Residues lysine 330 to serine 334 carry the 'KMSKS' region motif. Lysine 333 contacts ATP. Positions methionine 550–alanine 573 are enriched in low complexity. The disordered stretch occupies residues methionine 550–threonine 582. The tRNA-binding domain maps to aspartate 591–arginine 694.

Belongs to the class-I aminoacyl-tRNA synthetase family. MetG type 1 subfamily. Homodimer. Zn(2+) is required as a cofactor.

Its subcellular location is the cytoplasm. The catalysed reaction is tRNA(Met) + L-methionine + ATP = L-methionyl-tRNA(Met) + AMP + diphosphate. In terms of biological role, is required not only for elongation of protein synthesis but also for the initiation of all mRNA translation through initiator tRNA(fMet) aminoacylation. This Xanthomonas euvesicatoria pv. vesicatoria (strain 85-10) (Xanthomonas campestris pv. vesicatoria) protein is Methionine--tRNA ligase.